Here is a 769-residue protein sequence, read N- to C-terminus: Multiple C2 domain and transmembrane region protein 5 (769 aa).

C2 domains lie at Ser23 to Tyr143, Pro184 to Phe305, and Tyr345 to Tyr467. The Ca(2+) site is built by Asp56, Asp62, Asp109, Asp111, and Asp116. 2 helical membrane-spanning segments follow: residues Ile604–Ile624 and Leu712–Val732.

Belongs to the MCTP family. Requires Ca(2+) as cofactor. In terms of tissue distribution, highly expressed in roots meristems and shoot apical meristems (SAMs). Observed in flowers.

It localises to the endoplasmic reticulum membrane. In terms of biological role, may function as a signaling molecule by regulating the trafficking of other regulators. This is Multiple C2 domain and transmembrane region protein 5 from Arabidopsis thaliana (Mouse-ear cress).